The primary structure comprises 476 residues: Probable G-protein coupled receptor No9 (476 aa).

Over 1-36 (MEGPPLSPAPADNVTLNVSCGRPATLFDWADHRLIS) the chain is Extracellular. Asn13 and Asn17 each carry an N-linked (GlcNAc...) asparagine glycan. Residues 37-60 (LLALAFLNLMVVAGNLLVVMAVFV) form a helical membrane-spanning segment. Over 61-69 (HSKLRTVTN) the chain is Cytoplasmic. Residues 70–93 (LFIVSLACADLLVGMLVLPFSATL) form a helical membrane-spanning segment. Topologically, residues 94–103 (EVLDVWLYGD) are extracellular. A helical membrane pass occupies residues 104–127 (VWCSVWLAVDVWMCTSSILNLCAI). An intrachain disulfide couples Cys106 to Cys192. Topologically, residues 128–152 (SLDRYLAVSQPISYPSLMSTRRAKQ) are cytoplasmic. The helical transmembrane segment at 153–172 (LIAAVWVLSFVICFPPLVGW) threads the bilayer. Residues 173–200 (NDRPGTLIGSRGSSACRLTCELTNERGY) lie on the Extracellular side of the membrane. The chain crosses the membrane as a helical span at residues 201–221 (VIYSALGSFFLPSTVMLFFYG). Residues 222 to 375 (RIYRTAVSTT…FRMETKAAKT (154 aa)) are Cytoplasmic-facing. Residues 266-278 (AAAGGARAHGQVR) are compositionally biased toward low complexity. 2 disordered regions span residues 266–293 (AAAG…NKPS) and 317–351 (DSRP…PRFI). A helical membrane pass occupies residues 376 to 396 (VGIIVGLFILCWLPFFVCYLV). Over 397–406 (RGFCADCVPP) the chain is Extracellular. A helical transmembrane segment spans residues 407–430 (LLFSVFFWLGYCNSAVNPCVYALC). Residues 431–476 (SRDFRFAFSSILCKCVCRRGAMERRFRRTLLVGNRSQTEEDCEVAD) lie on the Cytoplasmic side of the membrane.

It belongs to the G-protein coupled receptor 1 family.

Its subcellular location is the cell membrane. Functionally, orphan G-protein coupled receptor. This chain is Probable G-protein coupled receptor No9, found in Amphibalanus amphitrite (Striped barnacle).